The chain runs to 857 residues: Putative serine/threonine-protein kinase receptor (857 aa).

The N-terminal stretch at 1-32 (MKGARNIYHHSYMSFLLVFVVMILIHPALSIY) is a signal peptide. Residues 33–446 (INTLSSTESL…IAKKRNASGK (414 aa)) are Extracellular-facing. Residues 35-155 (TLSSTESLTI…SNNDASEYLW (121 aa)) form the Bulb-type lectin domain. Asparagine 47, asparagine 120, asparagine 196, asparagine 260, asparagine 389, and asparagine 442 each carry an N-linked (GlcNAc...) asparagine glycan. The region spanning 350-433 (CSGDGFTRMK…DGQDLYVRLA (84 aa)) is the PAN domain. 2 disulfide bridges follow: cysteine 380–cysteine 405 and cysteine 388–cysteine 390. A helical membrane pass occupies residues 447–466 (IISLTVGVSVLLLLIMFCLW). The Cytoplasmic segment spans residues 467 to 857 (KRKQKRAKAS…QYTCSVIDAR (391 aa)). The Protein kinase domain occupies 528 to 779 (FSSCNKLGQG…PSIFQPQEVL (252 aa)). ATP contacts are provided by residues 534-542 (LGQGGFGIV) and lysine 556. Aspartate 653 acts as the Proton acceptor in catalysis.

Belongs to the protein kinase superfamily. Ser/Thr protein kinase family. As to expression, predominantly in the pistil and anther.

It localises to the membrane. The catalysed reaction is L-seryl-[protein] + ATP = O-phospho-L-seryl-[protein] + ADP + H(+). The enzyme catalyses L-threonyl-[protein] + ATP = O-phospho-L-threonyl-[protein] + ADP + H(+). Functionally, involved in sporophytic self-incompatibility system (the inability of flowering plants to achieve self-fertilization), probably acting in combination with S-locus-specific glycoproteins. Interaction with a ligand in the extracellular domain triggers the protein kinase activity of the cytoplasmic domain. The chain is Putative serine/threonine-protein kinase receptor (SRK6) from Brassica oleracea var. viridis (Flowering kale).